The chain runs to 301 residues: Probable alpha-L-glutamate ligase (301 aa).

In terms of domain architecture, ATP-grasp spans 104–287 (LQLLSRKGVG…VAGRIVSFIE (184 aa)). ATP-binding positions include K141, 178–179 (EF), D187, and 211–213 (RSN). Positions 248, 260, and 262 each coordinate Mg(2+). Mn(2+) contacts are provided by D248, E260, and N262.

Belongs to the RimK family. It depends on Mg(2+) as a cofactor. The cofactor is Mn(2+).

The protein is Probable alpha-L-glutamate ligase of Thioalkalivibrio sulfidiphilus (strain HL-EbGR7).